Here is a 241-residue protein sequence, read N- to C-terminus: Probable pectate lyase D (241 aa).

An N-terminal signal peptide occupies residues 1–17 (MYQKSLLFSLLATSALA). N215 carries N-linked (GlcNAc...) asparagine glycosylation. The tract at residues 215-241 (NNSGDEPEEVSEGPSDACQYSEPLSSC) is disordered.

This sequence belongs to the polysaccharide lyase 3 family. Ca(2+) is required as a cofactor.

The protein resides in the secreted. The enzyme catalyses Eliminative cleavage of (1-&gt;4)-alpha-D-galacturonan to give oligosaccharides with 4-deoxy-alpha-D-galact-4-enuronosyl groups at their non-reducing ends.. Functionally, pectinolytic enzyme consist of four classes of enzymes: pectin lyase, polygalacturonase, pectin methylesterase and rhamnogalacturonase. Among pectinolytic enzymes, pectin lyase is the most important in depolymerization of pectin, since it cleaves internal glycosidic bonds of highly methylated pectins. Favors pectate, the anion, over pectin, the methyl ester. This chain is Probable pectate lyase D (plyD), found in Neosartorya fischeri (strain ATCC 1020 / DSM 3700 / CBS 544.65 / FGSC A1164 / JCM 1740 / NRRL 181 / WB 181) (Aspergillus fischerianus).